The primary structure comprises 443 residues: Ribosomal protein uS12 methylthiotransferase RimO (443 aa).

The region spanning 5–115 (PNIGFISLGC…VMKHVHKYVP (111 aa)) is the MTTase N-terminal domain. Residues C14, C50, C79, C147, C151, and C154 each coordinate [4Fe-4S] cluster. The Radical SAM core domain occupies 133–374 (LTPKHYAYLK…MQVQQRISAA (242 aa)). Residues 377-443 (QQKVGKTLAV…ADEYDLWGTC (67 aa)) enclose the TRAM domain.

Belongs to the methylthiotransferase family. RimO subfamily. It depends on [4Fe-4S] cluster as a cofactor.

It localises to the cytoplasm. The catalysed reaction is L-aspartate(89)-[ribosomal protein uS12]-hydrogen + (sulfur carrier)-SH + AH2 + 2 S-adenosyl-L-methionine = 3-methylsulfanyl-L-aspartate(89)-[ribosomal protein uS12]-hydrogen + (sulfur carrier)-H + 5'-deoxyadenosine + L-methionine + A + S-adenosyl-L-homocysteine + 2 H(+). In terms of biological role, catalyzes the methylthiolation of an aspartic acid residue of ribosomal protein uS12. The polypeptide is Ribosomal protein uS12 methylthiotransferase RimO (Actinobacillus pleuropneumoniae serotype 7 (strain AP76)).